We begin with the raw amino-acid sequence, 193 residues long: Rho-related protein racF1 (193 aa).

Position 10–17 (10–17) interacts with GTP; that stretch reads GDGAVGKT. Positions 32–40 match the Effector region motif; that stretch reads YIPTVFDNY. GTP-binding positions include 57-61 and 115-118; these read DTAGQ and TKQD. Cysteine methyl ester is present on cysteine 190. Residue cysteine 190 is the site of S-geranylgeranyl cysteine attachment. Residues 191-193 constitute a propeptide, removed in mature form; the sequence is TIM.

Belongs to the small GTPase superfamily. Rho family. Interacts with pakB.

It localises to the membrane. In terms of biological role, might act in concert and/or share functions with other members of the RHO family in the regulation of a subset of cytoskeletal rearrangements that are required for these processes. In Dictyostelium discoideum (Social amoeba), this protein is Rho-related protein racF1 (racF1).